Consider the following 585-residue polypeptide: Switch-associated protein 70 (585 aa).

Residues 210-306 (DVLKQGYMMK…WIQAIYSTIH (97 aa)) enclose the PH domain. Residues 316-529 (HKEARQRRKE…VKKKLEMATH (214 aa)) adopt a coiled-coil conformation. Residues 347-373 (ANENKQQELESVRKKLEEAASRAADEE) are disordered. Over residues 351–373 (KQQELESVRKKLEEAASRAADEE) the composition is skewed to basic and acidic residues.

As to quaternary structure, the SWAP complex consists of NPM1, NCL, PARP1 and SWAP70. Tyrosine-phosphorylated. As to expression, spleen. Expressed only in B-cells that have been induced to switch to various Ig isotypes.

It is found in the cytoplasm. It localises to the cell membrane. The protein localises to the nucleus. Its subcellular location is the cell projection. The protein resides in the lamellipodium. It is found in the cytoskeleton. In terms of biological role, phosphatidylinositol 3,4,5-trisphosphate-dependent guanine nucleotide exchange factor (GEF) which, independently of RAS, transduces signals from tyrosine kinase receptors to RAC. It also mediates signaling of membrane ruffling. Regulates the actin cytoskeleton as an effector or adapter protein in response to agonist stimulated phosphatidylinositol (3,4)-bisphosphate production and cell protrusion. The chain is Switch-associated protein 70 (Swap70) from Mus musculus (Mouse).